Here is a 1134-residue protein sequence, read N- to C-terminus: Phytochrome 1 (1134 aa).

One can recognise a GAF domain in the interval 219–401 (DIGLLCDTVV…VFGLQLNMEA (183 aa)). Cys-324 is a phytochromobilin binding site. Residues 616 to 687 (VANEMVRLIE…RLLYLALQGD (72 aa)) enclose the PAS 1 domain. Positions 690–746 (QNVELKLKTFGGQKDKEAVILVVNACASRDVSDNVVGVCFVGQDVTGQKVVMDKFTR) constitute a PAC domain. In terms of domain architecture, PAS 2 spans 750 to 821 (DYKAIVQNPN…KGQDAVTKFM (72 aa)). Residues 901 to 1121 (YIRQEIKNPL…LVSLELPLAQ (221 aa)) enclose the Histidine kinase domain.

It belongs to the phytochrome family. In terms of assembly, homodimer. In terms of processing, contains one covalently linked phytochromobilin chromophore.

In terms of biological role, regulatory photoreceptor which exists in two forms that are reversibly interconvertible by light: the Pr form that absorbs maximally in the red region of the spectrum and the Pfr form that absorbs maximally in the far-red region. Photoconversion of Pr to Pfr induces an array of morphogenic responses, whereas reconversion of Pfr to Pr cancels the induction of those responses. Pfr controls the expression of a number of nuclear genes including those encoding the small subunit of ribulose-bisphosphate carboxylase, chlorophyll A/B binding protein, protochlorophyllide reductase, rRNA, etc. It also controls the expression of its own gene(s) in a negative feedback fashion. This chain is Phytochrome 1 (PHY1), found in Selaginella martensii (Martens's spike moss).